The primary structure comprises 263 residues: 3-deoxy-manno-octulosonate cytidylyltransferase (263 aa).

Belongs to the KdsB family.

The protein resides in the cytoplasm. It carries out the reaction 3-deoxy-alpha-D-manno-oct-2-ulosonate + CTP = CMP-3-deoxy-beta-D-manno-octulosonate + diphosphate. It participates in nucleotide-sugar biosynthesis; CMP-3-deoxy-D-manno-octulosonate biosynthesis; CMP-3-deoxy-D-manno-octulosonate from 3-deoxy-D-manno-octulosonate and CTP: step 1/1. Its pathway is bacterial outer membrane biogenesis; lipopolysaccharide biosynthesis. Functionally, activates KDO (a required 8-carbon sugar) for incorporation into bacterial lipopolysaccharide in Gram-negative bacteria. In Burkholderia multivorans (strain ATCC 17616 / 249), this protein is 3-deoxy-manno-octulosonate cytidylyltransferase.